Consider the following 315-residue polypeptide: Transmembrane protein 231 (315 aa).

The chain crosses the membrane as a helical span at residues A23–F43. N-linked (GlcNAc...) asparagine glycosylation is found at N194, N199, and N221. A helical transmembrane segment spans residues F262 to W282.

Belongs to the TMEM231 family. In terms of assembly, part of the tectonic-like complex (also named B9 complex). Interacts with TMEM107.

It is found in the cell projection. The protein resides in the cilium membrane. Functionally, transmembrane component of the tectonic-like complex, a complex localized at the transition zone of primary cilia and acting as a barrier that prevents diffusion of transmembrane proteins between the cilia and plasma membranes. Required for ciliogenesis and sonic hedgehog/SHH signaling. This is Transmembrane protein 231 (Tmem231) from Mus musculus (Mouse).